Here is a 94-residue protein sequence, read N- to C-terminus: Co-chaperonin GroES (94 aa).

The protein belongs to the GroES chaperonin family. As to quaternary structure, heptamer of 7 subunits arranged in a ring. Interacts with the chaperonin GroEL.

Its subcellular location is the cytoplasm. In terms of biological role, together with the chaperonin GroEL, plays an essential role in assisting protein folding. The GroEL-GroES system forms a nano-cage that allows encapsulation of the non-native substrate proteins and provides a physical environment optimized to promote and accelerate protein folding. GroES binds to the apical surface of the GroEL ring, thereby capping the opening of the GroEL channel. This is Co-chaperonin GroES from Staphylococcus epidermidis.